Reading from the N-terminus, the 330-residue chain is DNA-directed RNA polymerase subunit alpha (330 aa).

The alpha N-terminal domain (alpha-NTD) stretch occupies residues 1-231 (MALFNFQKPD…IHHFMLFSDE (231 aa)). Residues 253–330 (MRQLLKTKLV…DLAKYKLDKE (78 aa)) are alpha C-terminal domain (alpha-CTD).

Belongs to the RNA polymerase alpha chain family. As to quaternary structure, homodimer. The RNAP catalytic core consists of 2 alpha, 1 beta, 1 beta' and 1 omega subunit. When a sigma factor is associated with the core the holoenzyme is formed, which can initiate transcription.

The catalysed reaction is RNA(n) + a ribonucleoside 5'-triphosphate = RNA(n+1) + diphosphate. Functionally, DNA-dependent RNA polymerase catalyzes the transcription of DNA into RNA using the four ribonucleoside triphosphates as substrates. This is DNA-directed RNA polymerase subunit alpha from Flavobacterium psychrophilum (strain ATCC 49511 / DSM 21280 / CIP 103535 / JIP02/86).